A 347-amino-acid polypeptide reads, in one-letter code: Rhodopsin (347 aa).

At 1-33 (TEGPDFYIPMVNTTGVVRSPYEYPQYYLVNPAA) the chain is on the extracellular side. A glycan (N-linked (GlcNAc...) asparagine) is linked at asparagine 12. Residues 34–58 (FAVLGAYMFFLIIIGFPINFLTLYV) form a helical membrane-spanning segment. The Cytoplasmic portion of the chain corresponds to 59–70 (TLEHKKLRTPLN). The helical transmembrane segment at 71-93 (YILLNLAVADLFMVIGGFTTTMY) threads the bilayer. The Extracellular portion of the chain corresponds to 94–107 (SSMHGYFVLGRLGC). A disulfide bridge links cysteine 107 with cysteine 184. A helical transmembrane segment spans residues 108 to 130 (NIEGFFATLGGMISLWSLAVLAI). Residues 131–133 (ERW) carry the 'Ionic lock' involved in activated form stabilization motif. The Cytoplasmic segment spans residues 131–149 (ERWVVVCKPISNFRFGENH). Residues 150 to 170 (AIMGVSLTWVMALACTVPPLV) form a helical membrane-spanning segment. Over 171–199 (GWSRYIPEGMQCACGIDYYTRAEGYNNES) the chain is Extracellular. An N-linked (GlcNAc...) asparagine glycan is attached at asparagine 197. Residues 200-221 (FVIYMFTFHFLFPMFIIFFCYG) traverse the membrane as a helical segment. Residues 222 to 249 (RLLCAVKEAAAAQQESETTQRAEREVTR) lie on the Cytoplasmic side of the membrane. Residues 250–271 (MVILMVIGYLVCWLPYASVAWF) form a helical membrane-spanning segment. The Extracellular segment spans residues 272 to 283 (IFTHKGSEFGPL). A helical transmembrane segment spans residues 284 to 305 (FMAVPSFFAKSSSIYNPIIYIC). N6-(retinylidene)lysine is present on lysine 293. Residues 306–347 (MNKQFRQCMITTLFCGKNPFEGQEEDSSTKTEASSASSVSPA) lie on the Cytoplasmic side of the membrane. Cysteine 320 carries the S-palmitoyl cysteine lipid modification. Residues 326 to 347 (EGQEEDSSTKTEASSASSVSPA) are disordered. Over residues 335-347 (KTEASSASSVSPA) the composition is skewed to low complexity.

It belongs to the G-protein coupled receptor 1 family. Opsin subfamily. Post-translationally, phosphorylated on some or all of the serine and threonine residues present in the C-terminal region. In terms of processing, contains one covalently linked retinal chromophore.

It is found in the membrane. Its subcellular location is the cell projection. The protein localises to the cilium. The protein resides in the photoreceptor outer segment. In terms of biological role, photoreceptor required for image-forming vision at low light intensity. While most salt water fish species use retinal as chromophore, most freshwater fish use 3-dehydroretinal, or a mixture of retinal and 3-dehydroretinal. Light-induced isomerization of 11-cis to all-trans retinal triggers a conformational change that activates signaling via G-proteins. Subsequent receptor phosphorylation mediates displacement of the bound G-protein alpha subunit by arrestin and terminates signaling. This chain is Rhodopsin (rho), found in Sargocentron tiere (Blue lined squirrelfish).